We begin with the raw amino-acid sequence, 404 residues long: Serine/threonine transporter SstT (404 aa).

8 consecutive transmembrane segments (helical) span residues 17 to 37 (IGIG…LTGF), 39 to 59 (ILGK…VFAL), 75 to 95 (MTLI…VAVL), 138 to 158 (ALAT…GLAL), 179 to 199 (IVVW…FTTI), 212 to 232 (FLIL…NPLI), 287 to 307 (IPLG…VLTL), and 313 to 333 (FGIP…AVSA).

Belongs to the dicarboxylate/amino acid:cation symporter (DAACS) (TC 2.A.23) family.

The protein localises to the cell membrane. The enzyme catalyses L-serine(in) + Na(+)(in) = L-serine(out) + Na(+)(out). It carries out the reaction L-threonine(in) + Na(+)(in) = L-threonine(out) + Na(+)(out). In terms of biological role, involved in the import of serine and threonine into the cell, with the concomitant import of sodium (symport system). In Streptococcus pyogenes serotype M12 (strain MGAS2096), this protein is Serine/threonine transporter SstT.